Reading from the N-terminus, the 103-residue chain is N(4)-acetylcytidine amidohydrolase (103 aa).

An ASCH domain is found at 6–94 (ITFFQRFQND…IAEIYPNQTQ (89 aa)). The active-site Proton acceptor is the K21. T24 (nucleophile) is an active-site residue. Residue E74 is the Proton donor of the active site.

It belongs to the N(4)-acetylcytidine amidohydrolase family.

The enzyme catalyses N(4)-acetylcytidine + H2O = cytidine + acetate + H(+). It carries out the reaction N(4)-acetyl-2'-deoxycytidine + H2O = 2'-deoxycytidine + acetate + H(+). It catalyses the reaction N(4)-acetylcytosine + H2O = cytosine + acetate + H(+). Functionally, catalyzes the hydrolysis of N(4)-acetylcytidine (ac4C). This chain is N(4)-acetylcytidine amidohydrolase (yqfB), found in Salmonella typhi.